We begin with the raw amino-acid sequence, 305 residues long: Oxygen-dependent coproporphyrinogen-III oxidase (305 aa).

S93 is a binding site for substrate. A divalent metal cation is bound by residues H97 and H107. H107 serves as the catalytic Proton donor. 109–111 (NVR) contributes to the substrate binding site. H146 and H176 together coordinate a divalent metal cation. The segment at 241–276 (YVEFNLVYDRGTLFGLQSGGRTESILMSLPPQVRWG) is important for dimerization. 259-261 (GGR) provides a ligand contact to substrate.

The protein belongs to the aerobic coproporphyrinogen-III oxidase family. Homodimer. Requires a divalent metal cation as cofactor.

The protein resides in the cytoplasm. It catalyses the reaction coproporphyrinogen III + O2 + 2 H(+) = protoporphyrinogen IX + 2 CO2 + 2 H2O. It participates in porphyrin-containing compound metabolism; protoporphyrin-IX biosynthesis; protoporphyrinogen-IX from coproporphyrinogen-III (O2 route): step 1/1. In terms of biological role, involved in the heme biosynthesis. Catalyzes the aerobic oxidative decarboxylation of propionate groups of rings A and B of coproporphyrinogen-III to yield the vinyl groups in protoporphyrinogen-IX. The polypeptide is Oxygen-dependent coproporphyrinogen-III oxidase (Pseudomonas fluorescens (strain ATCC BAA-477 / NRRL B-23932 / Pf-5)).